We begin with the raw amino-acid sequence, 187 residues long: Adenylate kinase (187 aa).

10–15 (GSGKGT) lines the ATP pocket. Residues 30–59 (STGDLLRAEVAAGSPLGLKAKEVMARGDLV) are NMP. AMP contacts are provided by residues Thr31, Arg36, 57–59 (DLV), 85–88 (GYPR), and Gln92. An LID region spans residues 126-136 (GRAKAEGREDD). An ATP-binding site is contributed by Arg127. The AMP site is built by Arg133 and Arg144. An ATP-binding site is contributed by Gly172.

The protein belongs to the adenylate kinase family. As to quaternary structure, monomer.

The protein resides in the cytoplasm. It carries out the reaction AMP + ATP = 2 ADP. Its pathway is purine metabolism; AMP biosynthesis via salvage pathway; AMP from ADP: step 1/1. Its function is as follows. Catalyzes the reversible transfer of the terminal phosphate group between ATP and AMP. Plays an important role in cellular energy homeostasis and in adenine nucleotide metabolism. The protein is Adenylate kinase of Xanthomonas oryzae pv. oryzae (strain MAFF 311018).